The chain runs to 354 residues: MTSPLITKAEVNSVFQGRSLLAEKDFTPAEINYLVDFGLHLKALKQQNIPHHYLEGKNIALLFAKTSTRTRAAFTTAAIDLGAHPEYLGANDIQLGIKESTEDTARVLGSMFDAIERRGFSQKEVEDLAKYSGVPVWNGLTDDWHPTQMIADFMTVKENFGYLKGLTLVYVGDGRNNMANSLIVTGSMLGVNVHIVAPDSLHPSKEVMDIANKFAEKSGAKPLATSNIEEGVKGANIIYSDVWVSMGESNWEERVKLLTPYRITMDMLKMTGNADNGKLIFMHCLPAFHDTETEYGKEIKEKYGLTEMEVTDAVFRSKYARQFEEAENRMHSIKAIMAATLGNLFIPAVPEDFK.

Carbamoyl phosphate-binding positions include 67 to 70 (STRT), glutamine 94, arginine 118, and 145 to 148 (HPTQ). Residues asparagine 177, aspartate 241, and 245–246 (SM) contribute to the L-ornithine site. Carbamoyl phosphate-binding positions include 284–285 (CL) and arginine 329.

The protein belongs to the aspartate/ornithine carbamoyltransferase superfamily. OTCase family.

It is found in the cytoplasm. The catalysed reaction is carbamoyl phosphate + L-ornithine = L-citrulline + phosphate + H(+). The protein operates within amino-acid degradation; L-arginine degradation via ADI pathway; carbamoyl phosphate from L-arginine: step 2/2. Its function is as follows. Reversibly catalyzes the transfer of the carbamoyl group from carbamoyl phosphate (CP) to the N(epsilon) atom of ornithine (ORN) to produce L-citrulline. This chain is Ornithine carbamoyltransferase, catabolic (arcB), found in Lactococcus lactis subsp. cremoris (Streptococcus cremoris).